Consider the following 311-residue polypeptide: Dermonecrotic toxin LlSicTox-alphaIII1i (311 aa).

Positions 1–21 are cleaved as a signal peptide; it reads MYAHLALILGCWTVVLQGAET. The propeptide occupies 22-26; that stretch reads DVGER. The active site involves H38. Positions 58 and 60 each coordinate Mg(2+). The active-site Nucleophile is H73. A disulfide bond links C77 and C83. D117 is a Mg(2+) binding site.

It belongs to the arthropod phospholipase D family. Class I subfamily. Mg(2+) serves as cofactor. As to expression, expressed by the venom gland.

The protein localises to the secreted. It catalyses the reaction an N-(acyl)-sphingosylphosphocholine = an N-(acyl)-sphingosyl-1,3-cyclic phosphate + choline. The enzyme catalyses an N-(acyl)-sphingosylphosphoethanolamine = an N-(acyl)-sphingosyl-1,3-cyclic phosphate + ethanolamine. The catalysed reaction is a 1-acyl-sn-glycero-3-phosphocholine = a 1-acyl-sn-glycero-2,3-cyclic phosphate + choline. It carries out the reaction a 1-acyl-sn-glycero-3-phosphoethanolamine = a 1-acyl-sn-glycero-2,3-cyclic phosphate + ethanolamine. In terms of biological role, dermonecrotic toxins cleave the phosphodiester linkage between the phosphate and headgroup of certain phospholipids (sphingolipid and lysolipid substrates), forming an alcohol (often choline) and a cyclic phosphate. This toxin acts on sphingomyelin (SM) with high activity. It also act on acyl- and alkyl-lysophosphatidylcholine (LPC), but not on sphingosylphosphorylcholine (SPC) and phosphatidylcholine (PC). It may also act on ceramide phosphoethanolamine (CPE), and lysophosphatidylethanolamine (LPE), but not on lysophosphatidylserine (LPS), and lysophosphatidylglycerol (LPG). It acts by transphosphatidylation, releasing exclusively cyclic phosphate products as second products. Induces complement-dependent hemolysis and dermonecrosis. Also induces increased vascular permeability, edema, inflammatory response, and platelet aggregation. This Loxosceles laeta (South American recluse spider) protein is Dermonecrotic toxin LlSicTox-alphaIII1i.